The following is a 507-amino-acid chain: ATP synthase subunit alpha, mitochondrial (507 aa).

171-178 (GDRQTGKT) provides a ligand contact to ATP.

This sequence belongs to the ATPase alpha/beta chains family. As to quaternary structure, F-type ATPases have 2 components, CF(1) - the catalytic core - and CF(0) - the membrane proton channel. CF(1) has five subunits: alpha(3), beta(3), gamma(1), delta(1), epsilon(1). CF(0) has three main subunits: a, b and c.

The protein localises to the mitochondrion. It is found in the mitochondrion inner membrane. Functionally, mitochondrial membrane ATP synthase (F(1)F(0) ATP synthase or Complex V) produces ATP from ADP in the presence of a proton gradient across the membrane which is generated by electron transport complexes of the respiratory chain. F-type ATPases consist of two structural domains, F(1) - containing the extramembraneous catalytic core, and F(0) - containing the membrane proton channel, linked together by a central stalk and a peripheral stalk. During catalysis, ATP synthesis in the catalytic domain of F(1) is coupled via a rotary mechanism of the central stalk subunits to proton translocation. Subunits alpha and beta form the catalytic core in F(1). Rotation of the central stalk against the surrounding alpha(3)beta(3) subunits leads to hydrolysis of ATP in three separate catalytic sites on the beta subunits. Subunit alpha does not bear the catalytic high-affinity ATP-binding sites. The chain is ATP synthase subunit alpha, mitochondrial (ATPA) from Raphanus sativus (Radish).